We begin with the raw amino-acid sequence, 211 residues long: Large ribosomal subunit protein uL4 (211 aa).

The tract at residues 44–90 (ERQGTHSTLTKGEVRGGGKKPWRQKHTGKARTGSTRNPHWTGGGVVF) is disordered. Residues 60–72 (GGKKPWRQKHTGK) are compositionally biased toward basic residues.

This sequence belongs to the universal ribosomal protein uL4 family. As to quaternary structure, part of the 50S ribosomal subunit.

Functionally, one of the primary rRNA binding proteins, this protein initially binds near the 5'-end of the 23S rRNA. It is important during the early stages of 50S assembly. It makes multiple contacts with different domains of the 23S rRNA in the assembled 50S subunit and ribosome. Its function is as follows. Forms part of the polypeptide exit tunnel. The chain is Large ribosomal subunit protein uL4 from Ureaplasma urealyticum serovar 10 (strain ATCC 33699 / Western).